We begin with the raw amino-acid sequence, 798 residues long: Neuroligin-1 (798 aa).

The N-terminal stretch at 1–17 is a signal peptide; that stretch reads MERIYLLLLLFLPRIRS. Over 18-685 the chain is Extracellular; that stretch reads YDVRSVTTSW…AAGSFTGKAL (668 aa). The cysteines at positions 86 and 125 are disulfide-linked. Residues Asn164, Asn292, and Asn315 are each glycosylated (N-linked (GlcNAc...) asparagine). A disulfide bond links Cys288 and Cys307. The disordered stretch occupies residues 636-676; the sequence is ANLPFPPPPMPPSPPPELTTKPKPSESPTTLQTTTESEKAA. The span at 639-652 shows a compositional bias: pro residues; that stretch reads PFPPPPMPPSPPPE. The span at 653–665 shows a compositional bias: low complexity; it reads LTTKPKPSESPTT. The chain crosses the membrane as a helical span at residues 686–706; the sequence is GGVIFIGCGFLIMNVCLLIAV. Residues 707–798 are Cytoplasmic-facing; it reads RREWGKKRRN…QAPTLEEIQV (92 aa). The disordered stretch occupies residues 731–765; that stretch reads HGGGAEQYNSLNSPEPLLSASHKNSTSMRPAGISP.

This sequence belongs to the type-B carboxylesterase/lipase family. In terms of assembly, interacts (via extracellular domain) with isoform b of madd-4; the interaction is required for the localization to postsynaptic domains. Interacts with unc-49.

Its subcellular location is the cell membrane. The protein resides in the synapse. Its function is as follows. Probable neuronal cell surface protein thought to be involved in cell-cell-interactions by forming intercellular junctions through binding to beta-neurexins. Plays a role in the clustering of the GABA(A) receptor unc-49 at postsynaptic sites in neuromuscular junctions (NMJs) via the interaction with madd-4 and neurexin nrx-1 and is thereby required for normal GABAergic synaptic transmission. The chain is Neuroligin-1 (nlg-1) from Caenorhabditis elegans.